The primary structure comprises 762 residues: Semaphorin-4A (762 aa).

The signal sequence occupies residues M1–A32. Residues G33–H684 lie on the Extracellular side of the membrane. One can recognise a Sema domain in the interval Q37–R495. A disulfide bond links C114 and C125. Residues N121 and N136 are each glycosylated (N-linked (GlcNAc...) asparagine). Disulfide bonds link C143/C152, C270/C380, and C294/C340. N-linked (GlcNAc...) asparagine glycosylation is found at N314 and N497. A PSI domain is found at N497–P544. Cystine bridges form between C498-C515 and C507-C524. The region spanning N574–F632 is the Ig-like C2-type domain. The N-linked (GlcNAc...) asparagine glycan is linked to N608. A helical transmembrane segment spans residues F685 to V705. The Cytoplasmic portion of the chain corresponds to S706–A762. The interval T722 to A762 is disordered.

Belongs to the semaphorin family. In terms of assembly, interacts with PLXNB1, PLXNB2, PLXNB3, PLXND1 and TIMD2.

It localises to the cell membrane. Its function is as follows. Cell surface receptor for PLXNB1, PLXNB2, PLXNB3 and PLXND1 that plays an important role in cell-cell signaling. Regulates glutamatergic and GABAergic synapse development. Promotes the development of inhibitory synapses in a PLXNB1-dependent manner and promotes the development of excitatory synapses in a PLXNB2-dependent manner. Plays a role in priming antigen-specific T-cells, promotes differentiation of Th1 T-helper cells, and thereby contributes to adaptive immunity. Promotes phosphorylation of TIMD2. Inhibits angiogenesis. Promotes axon growth cone collapse. Inhibits axonal extension by providing local signals to specify territories inaccessible for growing axons. The polypeptide is Semaphorin-4A (SEMA4A) (Bos taurus (Bovine)).